The chain runs to 202 residues: Imidazole glycerol phosphate synthase subunit HisH (202 aa).

Positions 3-202 (RIVILDYGLG…KILKNFVDMC (200 aa)) constitute a Glutamine amidotransferase type-1 domain. Cysteine 79 (nucleophile) is an active-site residue. Active-site residues include histidine 183 and glutamate 185.

Heterodimer of HisH and HisF.

The protein localises to the cytoplasm. It catalyses the reaction 5-[(5-phospho-1-deoxy-D-ribulos-1-ylimino)methylamino]-1-(5-phospho-beta-D-ribosyl)imidazole-4-carboxamide + L-glutamine = D-erythro-1-(imidazol-4-yl)glycerol 3-phosphate + 5-amino-1-(5-phospho-beta-D-ribosyl)imidazole-4-carboxamide + L-glutamate + H(+). The catalysed reaction is L-glutamine + H2O = L-glutamate + NH4(+). The protein operates within amino-acid biosynthesis; L-histidine biosynthesis; L-histidine from 5-phospho-alpha-D-ribose 1-diphosphate: step 5/9. Its function is as follows. IGPS catalyzes the conversion of PRFAR and glutamine to IGP, AICAR and glutamate. The HisH subunit catalyzes the hydrolysis of glutamine to glutamate and ammonia as part of the synthesis of IGP and AICAR. The resulting ammonia molecule is channeled to the active site of HisF. In Methanosarcina barkeri (strain Fusaro / DSM 804), this protein is Imidazole glycerol phosphate synthase subunit HisH.